The sequence spans 162 residues: uncharacterized protein (162 aa).

Positions 1 to 23 are disordered; that stretch reads MAQLPLSPAPQRPETKTPGKPEA. Over residues 13–23 the composition is skewed to basic and acidic residues; that stretch reads PETKTPGKPEA.

This is an uncharacterized protein from Rhodobacter capsulatus (Rhodopseudomonas capsulata).